Consider the following 402-residue polypeptide: Acetyl-CoA acetyltransferase (402 aa).

Residue cysteine 90 is the Acyl-thioester intermediate of the active site. Residues tyrosine 185 and lysine 230 each contribute to the CoA site. Tyrosine 185 is a binding site for K(+). Residue alanine 250 coordinates K(+). Serine 251 is a CoA binding site. A K(+)-binding site is contributed by valine 348. Active-site proton acceptor residues include histidine 352 and cysteine 382.

Belongs to the thiolase-like superfamily. Thiolase family. As to quaternary structure, homotetramer.

The protein resides in the cytoplasm. Its subcellular location is the cytosol. The enzyme catalyses 2 acetyl-CoA = acetoacetyl-CoA + CoA. It functions in the pathway metabolic intermediate biosynthesis; (R)-mevalonate biosynthesis; (R)-mevalonate from acetyl-CoA: step 1/3. Acetyl-CoA acetyltransferase; part of the first module of ergosterol biosynthesis pathway that includes the early steps of the pathway, conserved across all eukaryotes, and which results in the formation of mevalonate from acetyl-coenzyme A (acetyl-CoA). ERG10 catalyzes the formation of acetoacetyl-CoA from acetyl-CoA. The first module starts with the action of the cytosolic acetyl-CoA acetyltransferase ERG10 that catalyzes the formation of acetoacetyl-CoA. The hydroxymethylglutaryl-CoA synthase ERG13 then condenses acetyl-CoA with acetoacetyl-CoA to form HMG-CoA. The 3-hydroxy-3-methylglutaryl-coenzyme A (HMG-CoA) reductase HMG1 finally reduces HMG-CoA to produce mevalonate. This is Acetyl-CoA acetyltransferase from Candida albicans (strain SC5314 / ATCC MYA-2876) (Yeast).